A 325-amino-acid chain; its full sequence is Beta-lactamase 1 (325 aa).

Residues 1-26 (MRIRPTRRLLLGAVAPLALVPLVACG) form the signal peptide. The tract at residues 30–50 (GSESGQQPGLGGCGTSAHGSA) is disordered. The active-site Acyl-ester intermediate is serine 93. 270–272 (KSG) contacts substrate.

This sequence belongs to the class-A beta-lactamase family.

It carries out the reaction a beta-lactam + H2O = a substituted beta-amino acid. The polypeptide is Beta-lactamase 1 (blaL) (Streptomyces cacaoi).